The following is a 383-amino-acid chain: Forkhead box protein I3-B (383 aa).

The segment covering 1–12 (MTSYESQGQSPT) has biased composition (polar residues). Disordered regions lie at residues 1–55 (MTSY…YELG), 215–277 (DNGN…PCLS), and 317–348 (TTGF…SPSH). A compositionally biased stretch (low complexity) spans 25-35 (PPELSLYSDSY). The fork-head DNA-binding region spans 130 to 224 (RPPYSYSALI…DNGNFRRKRK (95 aa)). The short motif at 220 to 226 (RRKRKRK) is the Nuclear localization signal element. Low complexity predominate over residues 234–249 (SSSGGNESGDSNGRGS). Polar residues predominate over residues 250 to 277 (PKSQSIDISTSPEKGPSPASTGPSPCLS). The span at 317–330 (TTGFSTFTPSTTVS) shows a compositional bias: low complexity.

In terms of tissue distribution, expressed in ionocyte precursors.

It localises to the nucleus. Its function is as follows. Transcription factor required for epithelial cell differentiation. Involved in specification of skin ionocytes from epidermal precursors. The sequence is that of Forkhead box protein I3-B from Danio rerio (Zebrafish).